Consider the following 308-residue polypeptide: Putative ankyrin repeat protein R835 (308 aa).

ANK repeat units follow at residues aspartate 100 to leucine 129, proline 152 to phenylalanine 181, serine 190 to tyrosine 217, lysine 218 to lysine 247, glycine 249 to tyrosine 277, and tyrosine 279 to isoleucine 305.

This Acanthamoeba polyphaga (Amoeba) protein is Putative ankyrin repeat protein R835.